The chain runs to 492 residues: MTLWINGDWVTGQGALRVKRNPVSGEVLWQGNDADAAQVGQACRAARAAFPRWARLSFGDRQVRVERFAGLLESNKAELTAIIARETGKPRWEAATEVTAMINKIAISIKAYHVRTGEQRSEMPDGAASLRHRPHGVLAVFGPYNFPGHLPNGHIVPALLAGNTIIFKPSELTPWSGDAVMRLWQQAGLPPGVLNLVQGGRETGQALSALEDLDGLLFTGSANTGYQLHHQLSGQPEKILALEMGGNNPLIIDEVADIDAAVHLTIQSAFVTAGQRCTCARRLFLKSGTQGDAFLARLVAVSQRLTPGTWDDEPQPFIGGLISEQAAQQVVTAWQELEAMGGRTLLAPRLLQAGTSLLTPGIIEMTGVTGLPDEEVFGPLLRVWRYDNFDEAIRMANNTRFGLSCGLVSPEREKFDQLLLEARAGIVNWNKPLTGAASTAPFGGIGASGNHRPSAWYAADYCAWPMASLESDSLTLPATLNPGLDFSDEVVR.

220–225 (GSANTG) provides a ligand contact to NAD(+). Residues Glu243 and Cys277 contribute to the active site.

This sequence belongs to the aldehyde dehydrogenase family. AstD subfamily.

It catalyses the reaction N-succinyl-L-glutamate 5-semialdehyde + NAD(+) + H2O = N-succinyl-L-glutamate + NADH + 2 H(+). The protein operates within amino-acid degradation; L-arginine degradation via AST pathway; L-glutamate and succinate from L-arginine: step 4/5. Its function is as follows. Catalyzes the NAD-dependent reduction of succinylglutamate semialdehyde into succinylglutamate. This is N-succinylglutamate 5-semialdehyde dehydrogenase from Escherichia coli O81 (strain ED1a).